We begin with the raw amino-acid sequence, 61 residues long: Small ribosomal subunit protein uS14 (61 aa).

Zn(2+)-binding residues include C24, C27, C40, and C43.

This sequence belongs to the universal ribosomal protein uS14 family. Zinc-binding uS14 subfamily. Part of the 30S ribosomal subunit. Contacts proteins S3 and S10. It depends on Zn(2+) as a cofactor.

In terms of biological role, binds 16S rRNA, required for the assembly of 30S particles and may also be responsible for determining the conformation of the 16S rRNA at the A site. In Chloroflexus aurantiacus (strain ATCC 29364 / DSM 637 / Y-400-fl), this protein is Small ribosomal subunit protein uS14.